Reading from the N-terminus, the 741-residue chain is Protein ACCUMULATION AND REPLICATION OF CHLOROPLASTS 3, chloroplastic (741 aa).

The N-terminal 41 residues, Met-1–Asn-41, are a transit peptide targeting the chloroplast. 2 disordered regions span residues Glu-444 to Asp-465 and Asp-539 to Thr-558. Residues Tyr-451–Asp-465 show a composition bias toward basic and acidic residues. A compositionally biased stretch (polar residues) spans Phe-546–Thr-558. MORN repeat units follow at residues Gln-612–Ser-628, Tyr-630–Val-652, and Phe-653–Arg-675.

As to quaternary structure, self-interacts. Interacts with FTSZ, CDP1/PARC6 (via N-terminus), MIND1 and MINE1. Part of a complex made of ARC3, ARC6, FTSZ1 and FTSZ2. Recruited to the middle of the plastid by CDP1/PARC6 where subsequent complex made of CDP1/PARC6, ARC3 and FtsZ proteins can form; this complex enhances the dynamics of Z rings during chloroplast division. Binding to FTSZ2-1 is enabled by ARC6.

It is found in the plastid. The protein resides in the chloroplast outer membrane. The protein localises to the chloroplast stroma. Its function is as follows. Together with MIND1 and MCD1, regulates FtsZ ring positioning in chloroplasts in an ARC6-dependent manner. Z-ring accessory protein involved in the initiation of plastid division and division site placement (might functionally replace bacterial MinC). Acts as a disassembly factor that accelerates fragmentation and depolymerization of existing FtsZ2 filaments by enhancing FTSZ2 GTPase activity, thus leading to the conversion of FTSZ2 bound GTP into GDP, a process which triggers FtsZ2 filaments destabilization. Prevents misplaced Z-ring formation at chloroplast stroma nondivision sites. May control the rate of chloroplast expansion. Seems to influence stromule (stroma-filled tubular extensions of the plastid envelope membrane) length and frequency. This is Protein ACCUMULATION AND REPLICATION OF CHLOROPLASTS 3, chloroplastic from Arabidopsis thaliana (Mouse-ear cress).